The following is a 101-amino-acid chain: Large ribosomal subunit protein uL23 (101 aa).

The protein belongs to the universal ribosomal protein uL23 family. In terms of assembly, part of the 50S ribosomal subunit. Contacts protein L29, and trigger factor when it is bound to the ribosome.

One of the early assembly proteins it binds 23S rRNA. One of the proteins that surrounds the polypeptide exit tunnel on the outside of the ribosome. Forms the main docking site for trigger factor binding to the ribosome. This Azoarcus sp. (strain BH72) protein is Large ribosomal subunit protein uL23.